Consider the following 540-residue polypeptide: Chaperonin GroEL (540 aa).

Residues 30–33 (TLGP), Lys51, 87–91 (DGTTT), Gly415, and Asp496 contribute to the ATP site.

The protein belongs to the chaperonin (HSP60) family. As to quaternary structure, forms a cylinder of 14 subunits composed of two heptameric rings stacked back-to-back. Interacts with the co-chaperonin GroES.

The protein localises to the cytoplasm. The enzyme catalyses ATP + H2O + a folded polypeptide = ADP + phosphate + an unfolded polypeptide.. Its function is as follows. Together with its co-chaperonin GroES, plays an essential role in assisting protein folding. The GroEL-GroES system forms a nano-cage that allows encapsulation of the non-native substrate proteins and provides a physical environment optimized to promote and accelerate protein folding. The sequence is that of Chaperonin GroEL from Thermodesulfovibrio yellowstonii (strain ATCC 51303 / DSM 11347 / YP87).